Consider the following 67-residue polypeptide: Conotoxin TsMMSK-011 (67 aa).

A signal peptide spans 1–22 (MMSKLGVLLTICLLLFPLTVLP). Residues 23–50 (MDGDQPADLPALRTQDIATDQSPWFDPV) constitute a propeptide that is removed on maturation. Intrachain disulfides connect Cys53/Cys65, Cys54/Cys61, and Cys58/Cys64. The residue at position 63 (Pro63) is a 4-hydroxyproline.

The protein belongs to the conotoxin M superfamily. In terms of tissue distribution, expressed by the venom duct.

Its subcellular location is the secreted. The protein is Conotoxin TsMMSK-011 of Conus tessulatus (Tessellate cone).